Reading from the N-terminus, the 402-residue chain is Flavohemoprotein (402 aa).

A Globin domain is found at 1-136 (MLSEKTIEIV…IADAFISIEA (136 aa)). A heme b-binding site is contributed by histidine 85. Active-site charge relay system residues include tyrosine 95 and glutamate 135. The reductase stretch occupies residues 147 to 402 (GGWKDFRNFV…EFFGPAASLQ (256 aa)). The FAD-binding FR-type domain maps to 150-260 (KDFRNFVVVK…SAPAGDFVLN (111 aa)). FAD-binding positions include tyrosine 188 and 204–207 (RQYS). 273–278 (GVGITP) is an NADP(+) binding site. FAD is bound at residue 394 to 397 (FFGP).

This sequence belongs to the globin family. Two-domain flavohemoproteins subfamily. The protein in the C-terminal section; belongs to the flavoprotein pyridine nucleotide cytochrome reductase family. Heme b serves as cofactor. The cofactor is FAD.

It catalyses the reaction 2 nitric oxide + NADPH + 2 O2 = 2 nitrate + NADP(+) + H(+). The enzyme catalyses 2 nitric oxide + NADH + 2 O2 = 2 nitrate + NAD(+) + H(+). Its function is as follows. Is involved in NO detoxification in an aerobic process, termed nitric oxide dioxygenase (NOD) reaction that utilizes O(2) and NAD(P)H to convert NO to nitrate, which protects the bacterium from various noxious nitrogen compounds. Therefore, plays a central role in the inducible response to nitrosative stress. In Bacillus cereus (strain ATCC 10987 / NRS 248), this protein is Flavohemoprotein.